A 218-amino-acid chain; its full sequence is MKIEKASHISQPVQLSTCTLIDTYPGHQGSMNNKEVELYGGAITTVVPPGFIDASTLREVPDTQEVYVNSRRDEEEFEDGLATNESIIVDLLETVDKSDLKEAWQFHVEDLTELNGTTKWEALQEDTVQQGTKFTGLVMEVANKWGKPDLAQTVVIGVALIRLTQFDTDVVISINVPLTKEEASQASNKELPARCHAVYQLLQEMVRKFHVVDTSLFA.

The protein belongs to the MOG1 family. Interacts with GSP1.

The protein localises to the nucleus. Its function is as follows. Involved in the Ran-GTPase system for nuclear protein import and poly(A)+ mRNA export. This Saccharomyces cerevisiae (strain ATCC 204508 / S288c) (Baker's yeast) protein is Nuclear import protein MOG1 (MOG1).